The primary structure comprises 372 residues: Protein RecA (372 aa).

An ATP-binding site is contributed by glycine 81–threonine 88.

Belongs to the RecA family.

The protein localises to the cytoplasm. In terms of biological role, can catalyze the hydrolysis of ATP in the presence of single-stranded DNA, the ATP-dependent uptake of single-stranded DNA by duplex DNA, and the ATP-dependent hybridization of homologous single-stranded DNAs. It interacts with LexA causing its activation and leading to its autocatalytic cleavage. This is Protein RecA from Haemophilus ducreyi (strain 35000HP / ATCC 700724).